Reading from the N-terminus, the 370-residue chain is Phospho-2-dehydro-3-deoxyheptonate aldolase, tyrosine-inhibited (370 aa).

It belongs to the class-I DAHP synthase family.

It carries out the reaction D-erythrose 4-phosphate + phosphoenolpyruvate + H2O = 7-phospho-2-dehydro-3-deoxy-D-arabino-heptonate + phosphate. Its pathway is metabolic intermediate biosynthesis; chorismate biosynthesis; chorismate from D-erythrose 4-phosphate and phosphoenolpyruvate: step 1/7. Its activity is regulated as follows. Inhibited by tyrosine. Functionally, stereospecific condensation of phosphoenolpyruvate (PEP) and D-erythrose-4-phosphate (E4P) giving rise to 3-deoxy-D-arabino-heptulosonate-7-phosphate (DAHP). In Candida albicans (strain SC5314 / ATCC MYA-2876) (Yeast), this protein is Phospho-2-dehydro-3-deoxyheptonate aldolase, tyrosine-inhibited (ARO4).